Consider the following 121-residue polypeptide: Cu-Zn superoxide dismutase-like protein (121 aa).

Cys-48 and Cys-98 are oxidised to a cystine.

It belongs to the Cu-Zn superoxide dismutase family.

It is found in the host cytoplasm. In terms of biological role, virion protein with no enzymatic activity. This is Cu-Zn superoxide dismutase-like protein from Vaccinia virus (strain Ankara) (VACV).